We begin with the raw amino-acid sequence, 413 residues long: Terephthalate 1,2-dioxygenase, terminal oxygenase component subunit alpha 2 (413 aa).

The Rieske domain occupies 41–144 (NYLCLESEIP…CKEEHGPRKL (104 aa)). Cysteine 82, histidine 84, cysteine 102, and histidine 105 together coordinate [2Fe-2S] cluster.

It belongs to the bacterial ring-hydroxylating dioxygenase alpha subunit family. In terms of assembly, heterotetramer composed of 2 alpha (TphA2I and TphA2II) and 2 beta (TphA3I and TphA3II) subunits. Part of a multicomponent enzyme system composed of a reductase (TphA1I or TphA1II) and a two-subunit oxygenase component (TphA2I or TphA2II and TphA3I or TphA3II). The cofactor is Fe cation. Requires [2Fe-2S] cluster as cofactor.

The enzyme catalyses terephthalate + NADH + O2 + H(+) = (3S,4R)-3,4-dihydroxycyclohexa-1,5-diene-1,4-dicarboxylate + NAD(+). Inhibited by EDTA. Its function is as follows. Component of the terephthalate 1,2-dioxygenase multicomponent enzyme system which catalyzes the dioxygenation of terephthalate (TER/TPA) to 1,2-dihydroxy-3,5-cyclohexadiene-1,4-dicarboxylic acid (DCD). It can also use 2,5-dicarboxypyridine (PDC) and 1,4-napthalenedicarboxylic acid (NDC) as substrates, and preferentially uses NADPH which is the physiological electron donor. This is Terephthalate 1,2-dioxygenase, terminal oxygenase component subunit alpha 2 (tphA2II) from Comamonas sp.